A 330-amino-acid chain; its full sequence is MKKTVLSGVQATGSLHLGNYLGAIKNWVKMQEEYNCFFFLADLHAITVDIKPSELNNSIMEVLAVYLAAGLNPDKVTIFAQSMVKEHTELAWLLNCVTPLGWLKRMTQFKDKAGSDQEKACLGLFSYPVLMAADILIYKADIVPVGEDQKQHLELTRDIAGVINRKFNKEILKVPEVLISETGTRIMSLRDGLKKMSKSDISDFSRINLKDDNDLIHQKIKKAKTDHLSFVSYDQETRPEISNLLDIYSSLSEESLEQIIGNYQNQGFAKFKEDLAEIIITNLQPIRDKYLELMNDKEYLLKILHKGAEKARIRASETVNEVKEQFGFVI.

ATP is bound by residues Gln10–Thr12 and Gly18–Asn19. The short motif at Ala11 to Asn19 is the 'HIGH' region element. Position 134 (Asp134) interacts with L-tryptophan. ATP is bound by residues Gly146–Asp148, Ile186, and Lys195–Ser199. The 'KMSKS' region motif lies at Lys195–Ser199.

The protein belongs to the class-I aminoacyl-tRNA synthetase family. Homodimer.

Its subcellular location is the cytoplasm. The catalysed reaction is tRNA(Trp) + L-tryptophan + ATP = L-tryptophyl-tRNA(Trp) + AMP + diphosphate + H(+). Its function is as follows. Catalyzes the attachment of tryptophan to tRNA(Trp). The sequence is that of Tryptophan--tRNA ligase from Rickettsia conorii (strain ATCC VR-613 / Malish 7).